A 515-amino-acid chain; its full sequence is FAD-dependent oxidoreductase domain-containing protein 1 homolog (515 aa).

The tract at residues Ala18–Leu37 is disordered. A helical membrane pass occupies residues Val100 to Leu116.

As to quaternary structure, associates with mitochondrial complex I assembly intermediates during its biogenesis. FAD is required as a cofactor.

It is found in the mitochondrion inner membrane. Involved in the assembly of the mitochondrial membrane respiratory chain NADH dehydrogenase (Complex I). The protein is FAD-dependent oxidoreductase domain-containing protein 1 homolog of Drosophila melanogaster (Fruit fly).